Here is a 117-residue protein sequence, read N- to C-terminus: Large ribosomal subunit protein uL18 (117 aa).

Belongs to the universal ribosomal protein uL18 family. Part of the 50S ribosomal subunit; part of the 5S rRNA/L5/L18/L25 subcomplex. Contacts the 5S and 23S rRNAs.

Its function is as follows. This is one of the proteins that bind and probably mediate the attachment of the 5S RNA into the large ribosomal subunit, where it forms part of the central protuberance. The protein is Large ribosomal subunit protein uL18 of Histophilus somni (strain 129Pt) (Haemophilus somnus).